Reading from the N-terminus, the 220-residue chain is 7-cyano-7-deazaguanine synthase (220 aa).

10–20 (FSGGQDSTTCL) is an ATP binding site. Zn(2+)-binding residues include C186, C195, C198, and C201.

It belongs to the QueC family. Homodimer. Zn(2+) serves as cofactor.

The enzyme catalyses 7-carboxy-7-deazaguanine + NH4(+) + ATP = 7-cyano-7-deazaguanine + ADP + phosphate + H2O + H(+). The protein operates within purine metabolism; 7-cyano-7-deazaguanine biosynthesis. Catalyzes the ATP-dependent conversion of 7-carboxy-7-deazaguanine (CDG) to 7-cyano-7-deazaguanine (preQ(0)). This chain is 7-cyano-7-deazaguanine synthase, found in Bacillus cereus (strain B4264).